The following is a 486-amino-acid chain: Arginine/agmatine antiporter (486 aa).

A run of 12 helical transmembrane segments spans residues 12–32, 41–61, 85–105, 129–149, 160–180, 211–231, 242–262, 296–316, 341–361, 367–387, 418–438, and 461–481; these read LGAI…GIFS, AGAG…FFIA, GFGP…QIFG, NTIP…FIVL, IIGT…TAFA, STML…VMSA, ATLL…ILPF, VGLL…VAEI, LSLY…YFST, MLSI…AFLF, LWLI…LLAL, and EVTK…LFST.

This sequence belongs to the amino acid-polyamine-organocation (APC) superfamily. Basic amino acid/polyamine antiporter (APA) (TC 2.A.3.2) family.

It localises to the cell inner membrane. Its function is as follows. Catalyzes the exchange of L-arginine for agmatine. The arginine uptake by the bacterium in the macrophage may be a virulence factor against the host innate immune response. The polypeptide is Arginine/agmatine antiporter (aaxC) (Chlamydia caviae (strain ATCC VR-813 / DSM 19441 / 03DC25 / GPIC) (Chlamydophila caviae)).